A 484-amino-acid chain; its full sequence is Cobyric acid synthase (484 aa).

The GATase cobBQ-type domain maps to 251–438 (ALKIAVPVLP…LHGLFASDAY (188 aa)). Cysteine 333 serves as the catalytic Nucleophile. Histidine 430 is an active-site residue.

The protein belongs to the CobB/CobQ family. CobQ subfamily.

It functions in the pathway cofactor biosynthesis; adenosylcobalamin biosynthesis. Functionally, catalyzes amidations at positions B, D, E, and G on adenosylcobyrinic A,C-diamide. NH(2) groups are provided by glutamine, and one molecule of ATP is hydrogenolyzed for each amidation. The sequence is that of Cobyric acid synthase from Rhizobium etli (strain CIAT 652).